A 269-amino-acid polypeptide reads, in one-letter code: MVMDSSKWWWIGNHNTTNFSPWLHSTLSELDEKTKEMLRVIDEDADSFAARAEMYYKKRPELIAMVEEFYRSHRSLAERYDLLRPSSVHKHGSDSESHEKSSTCDESSWSEACETHEEYAESEIDNGESKWVDESEIDGIVEEIEPSEVVYSEGNGNSEMMKIEIERLREENKVYSEMVREKDEEKREAIRQMSVAIQMLKEENSELKKRVTNTVVARRNKEGGDSQRKQQMWKPFEFKKIKLEGLWGKGFGNWALPNTDSTSKELMTL.

An NAB domain is found at 6-87; that stretch reads SKWWWIGNHN…ERYDLLRPSS (82 aa). The tract at residues 87–113 is disordered; it reads SVHKHGSDSESHEKSSTCDESSWSEAC. Residues 91-103 show a composition bias toward basic and acidic residues; that stretch reads HGSDSESHEKSST. The stretch at 155-214 forms a coiled coil; that stretch reads NGNSEMMKIEIERLREENKVYSEMVREKDEEKREAIRQMSVAIQMLKEENSELKKRVTNT.

This sequence belongs to the NET family.

The protein resides in the cytoplasm. Its subcellular location is the cytoskeleton. It is found in the nucleus membrane. Its function is as follows. Plant-specific actin binding protein. May be part of a membrane-cytoskeletal adapter complex. This Arabidopsis thaliana (Mouse-ear cress) protein is Protein NETWORKED 3A.